A 415-amino-acid chain; its full sequence is 3-oxoacyl-[acyl-carrier-protein] synthase 2 (415 aa).

Residues 3–412 (KRRVVVTGMG…GTNGSLVFKK (410 aa)) enclose the Ketosynthase family 3 (KS3) domain. Residues Cys-164, His-304, and His-342 each act as for beta-ketoacyl synthase activity in the active site.

Belongs to the thiolase-like superfamily. Beta-ketoacyl-ACP synthases family. As to quaternary structure, homodimer.

The enzyme catalyses a fatty acyl-[ACP] + malonyl-[ACP] + H(+) = a 3-oxoacyl-[ACP] + holo-[ACP] + CO2. The catalysed reaction is (9Z)-hexadecenoyl-[ACP] + malonyl-[ACP] + H(+) = 3-oxo-(11Z)-octadecenoyl-[ACP] + holo-[ACP] + CO2. It functions in the pathway lipid metabolism; fatty acid biosynthesis. Involved in the type II fatty acid elongation cycle. Catalyzes the elongation of a wide range of acyl-ACP by the addition of two carbons from malonyl-ACP to an acyl acceptor. Can efficiently catalyze the conversion of palmitoleoyl-ACP (cis-hexadec-9-enoyl-ACP) to cis-vaccenoyl-ACP (cis-octadec-11-enoyl-ACP), an essential step in the thermal regulation of fatty acid composition. The sequence is that of 3-oxoacyl-[acyl-carrier-protein] synthase 2 (fabF) from Vibrio harveyi (Beneckea harveyi).